The sequence spans 664 residues: DNA ligase (664 aa).

Residues 32-36 (DAEYD), 81-82 (SL), and E113 contribute to the NAD(+) site. Catalysis depends on K115, which acts as the N6-AMP-lysine intermediate. Positions 136, 173, 289, and 313 each coordinate NAD(+). Residues C407, C410, C425, and C431 each coordinate Zn(2+). The 79-residue stretch at 586–664 (ASEQPFAGKT…EEQLQAALQS (79 aa)) folds into the BRCT domain.

The protein belongs to the NAD-dependent DNA ligase family. LigA subfamily. Requires Mg(2+) as cofactor. Mn(2+) serves as cofactor.

The catalysed reaction is NAD(+) + (deoxyribonucleotide)n-3'-hydroxyl + 5'-phospho-(deoxyribonucleotide)m = (deoxyribonucleotide)n+m + AMP + beta-nicotinamide D-nucleotide.. DNA ligase that catalyzes the formation of phosphodiester linkages between 5'-phosphoryl and 3'-hydroxyl groups in double-stranded DNA using NAD as a coenzyme and as the energy source for the reaction. It is essential for DNA replication and repair of damaged DNA. The sequence is that of DNA ligase from Aeromonas salmonicida (strain A449).